The chain runs to 133 residues: MVNDSISDMLTRLRNAICAQHKVVQVPLTNINKNILKVLQKEGYIKNFEILFERKSGYLLVSLKYNSLNQDKPCLSVLKKISRPGLRMYVRTKKIPKVLGGTGIAIISTSKGVMTGSIARNLGIGGEILCYIW.

It belongs to the universal ribosomal protein uS8 family. Part of the 30S ribosomal subunit.

It localises to the plastid. The protein resides in the chloroplast. Functionally, one of the primary rRNA binding proteins, it binds directly to 16S rRNA central domain where it helps coordinate assembly of the platform of the 30S subunit. In Cyanidium caldarium (Red alga), this protein is Small ribosomal subunit protein uS8c (rps8).